Consider the following 443-residue polypeptide: Threonine/serine transporter TdcC (443 aa).

The next 11 helical transmembrane spans lie at 22–42, 44–64, 97–117, 140–160, 163–183, 207–227, 261–281, 312–332, 366–386, 389–409, and 423–443; these read TTWTLGLFGTAIGAGVLFFPI, AGFGGLIPILLMLVLAYPIAF, GVVITFLYFFAICPLLWIYGV, FVALFLLLLMAFVIWFGKDLM, VMSYLVWPFIASLVLISLSLI, ILITVWLGISIMVFSFNFSPI, MLMVAVVMFFAFSCLFTLSPA, AITLEYAASIIALVAIFKSFF, ISMIFIMGSTWVVAYANPNIL, IEAMGAPIIASLLCLLPMYAI, and DNVFVTVIGLLTILNIVYKLF.

It belongs to the amino acid/polyamine transporter 2 family. SdaC/TdcC subfamily.

It is found in the cell inner membrane. The enzyme catalyses L-threonine(in) + H(+)(in) = L-threonine(out) + H(+)(out). The catalysed reaction is L-serine(in) + H(+)(in) = L-serine(out) + H(+)(out). In terms of biological role, involved in the import of threonine and serine into the cell, with the concomitant import of a proton (symport system). This chain is Threonine/serine transporter TdcC, found in Escherichia coli O45:K1 (strain S88 / ExPEC).